We begin with the raw amino-acid sequence, 256 residues long: uncharacterized protein (256 aa).

Residues 213-243 (TMSMEAKLEAAKKTLEKFKQEAASKRAKRTK) adopt a coiled-coil conformation. Residues 231 to 256 (KQEAASKRAKRTKPSGSKTTRSTGRK) form a disordered region. Residues 244–256 (PSGSKTTRSTGRK) show a composition bias toward polar residues.

This is an uncharacterized protein from Acanthamoeba polyphaga (Amoeba).